The chain runs to 552 residues: MTKYVFVTGGVVSSLGKGIAAASLAAILESRGLKVTLLKLDPYINVDPGTMSPFQHGEVFVTEDGAETDLDLGHYERFISTKMRKANNFTTGQIYESVIRKERRGDYLGKTVQVIPHITNEIQAFIERGAASATCGEPDVAIVEIGGTVGDIESLPFLEAARQMSLRLGRNSACFVHLTLVPYVATAGELKTKPTQHSVQKLREIGILPHVLLCRADRRIPDDESKKISMFSNVPEDAVISVWDADSIYKIPQMLHDQGLDRIICEELKLSPKDADLSMWSELVEKLENPKHEVTIGMVGKYVDLTESYKSLIEALRHASLHTSTRVNIEYIDSEEIETNGVDSLKHLDAVLVPGGFGRRGTEGKIAAIRYARESKVPYLGICLGMQLAVIEFARDVVGLKQANSTEFDPETPERVVALITEWYDRDGKVETRTEESDLGGTMRLGSQRCPIKPGTMAEEIYGKDVNERHRHRYEVNNRFVPQLEAGGLIISARTPSEDLPEMMELPRSMHPWFVGVQFHPEFTSTPRDGHPLFKSFVEAALANKQARGVKA.

Residues 1–270 are amidoligase domain; that stretch reads MTKYVFVTGG…DRIICEELKL (270 aa). Residue S13 coordinates CTP. Residue S13 coordinates UTP. ATP contacts are provided by residues 14–19 and D71; that span reads SLGKGI. D71 and E144 together coordinate Mg(2+). CTP is bound by residues 151–153, 191–196, and K227; these read DIE and KTKPTQ. UTP contacts are provided by residues 191-196 and K227; that span reads KTKPTQ. Positions 295-547 constitute a Glutamine amidotransferase type-1 domain; it reads TIGMVGKYVD…VEAALANKQA (253 aa). G356 lines the L-glutamine pocket. C383 functions as the Nucleophile; for glutamine hydrolysis in the catalytic mechanism. L-glutamine contacts are provided by residues 384–387, E407, and R473; that span reads LGMQ. Residues H520 and E522 contribute to the active site.

Belongs to the CTP synthase family. Homotetramer.

The catalysed reaction is UTP + L-glutamine + ATP + H2O = CTP + L-glutamate + ADP + phosphate + 2 H(+). The enzyme catalyses L-glutamine + H2O = L-glutamate + NH4(+). It carries out the reaction UTP + NH4(+) + ATP = CTP + ADP + phosphate + 2 H(+). It functions in the pathway pyrimidine metabolism; CTP biosynthesis via de novo pathway; CTP from UDP: step 2/2. With respect to regulation, allosterically activated by GTP, when glutamine is the substrate; GTP has no effect on the reaction when ammonia is the substrate. The allosteric effector GTP functions by stabilizing the protein conformation that binds the tetrahedral intermediate(s) formed during glutamine hydrolysis. Inhibited by the product CTP, via allosteric rather than competitive inhibition. Catalyzes the ATP-dependent amination of UTP to CTP with either L-glutamine or ammonia as the source of nitrogen. Regulates intracellular CTP levels through interactions with the four ribonucleotide triphosphates. The polypeptide is CTP synthase (Burkholderia ambifaria (strain MC40-6)).